Consider the following 471-residue polypeptide: Adenosylhomocysteinase (471 aa).

Positions 60, 135, and 196 each coordinate substrate. 197–199 serves as a coordination point for NAD(+); sequence TTT. Substrate contacts are provided by Lys-226 and Asp-230. NAD(+) contacts are provided by residues Asn-231, 260–265, Glu-283, Asn-318, 339–341, and Asn-387; these read GYGDVG and IGH.

The protein belongs to the adenosylhomocysteinase family. NAD(+) is required as a cofactor.

The protein localises to the cytoplasm. The enzyme catalyses S-adenosyl-L-homocysteine + H2O = L-homocysteine + adenosine. The protein operates within amino-acid biosynthesis; L-homocysteine biosynthesis; L-homocysteine from S-adenosyl-L-homocysteine: step 1/1. In terms of biological role, may play a key role in the regulation of the intracellular concentration of adenosylhomocysteine. The chain is Adenosylhomocysteinase from Chlorobium luteolum (strain DSM 273 / BCRC 81028 / 2530) (Pelodictyon luteolum).